A 136-amino-acid polypeptide reads, in one-letter code: Large ribosomal subunit protein uL16 (136 aa).

Belongs to the universal ribosomal protein uL16 family. Part of the 50S ribosomal subunit.

Binds 23S rRNA and is also seen to make contacts with the A and possibly P site tRNAs. In Mannheimia succiniciproducens (strain KCTC 0769BP / MBEL55E), this protein is Large ribosomal subunit protein uL16.